Reading from the N-terminus, the 197-residue chain is MAKIRDPRFKLSRRLGVNIYGHPKAMKRATRENSREGKKLSNYGKQLLEKQKIRSYYGVLEKQFLRYVKKAMKSKERTGDVLLRSLECRLDNIAYRIGFANSIRQARQMVNHGHILVNGSKVNIPSYEVKTGDVITLREKYRKNDEFADNFLALKKFSLPYIEKDYDKFSGVLIKEPERDEIPIDANETLVVELYSK.

One can recognise an S4 RNA-binding domain in the interval 88 to 151 (CRLDNIAYRI…RKNDEFADNF (64 aa)).

The protein belongs to the universal ribosomal protein uS4 family. Part of the 30S ribosomal subunit. Contacts protein S5. The interaction surface between S4 and S5 is involved in control of translational fidelity.

In terms of biological role, one of the primary rRNA binding proteins, it binds directly to 16S rRNA where it nucleates assembly of the body of the 30S subunit. With S5 and S12 plays an important role in translational accuracy. The chain is Small ribosomal subunit protein uS4B from Clostridium botulinum (strain Hall / ATCC 3502 / NCTC 13319 / Type A).